Reading from the N-terminus, the 104-residue chain is L-rhamnose mutarotase (104 aa).

Substrate is bound at residue tyrosine 18. The active-site Proton donor is the histidine 22. Substrate-binding positions include tyrosine 41 and tryptophan 76–tryptophan 77.

Belongs to the rhamnose mutarotase family. In terms of assembly, homodimer.

The protein localises to the cytoplasm. It carries out the reaction alpha-L-rhamnose = beta-L-rhamnose. It functions in the pathway carbohydrate metabolism; L-rhamnose metabolism. Its function is as follows. Involved in the anomeric conversion of L-rhamnose. The polypeptide is L-rhamnose mutarotase (Burkholderia ambifaria (strain ATCC BAA-244 / DSM 16087 / CCUG 44356 / LMG 19182 / AMMD) (Burkholderia cepacia (strain AMMD))).